The following is a 366-amino-acid chain: tRNA/tmRNA (uracil-C(5))-methyltransferase (366 aa).

The S-adenosyl-L-methionine site is built by Gln-190, Tyr-218, Asn-223, Glu-239, and Asp-299. Cys-324 acts as the Nucleophile in catalysis. Catalysis depends on Glu-358, which acts as the Proton acceptor.

This sequence belongs to the class I-like SAM-binding methyltransferase superfamily. RNA M5U methyltransferase family. TrmA subfamily.

It catalyses the reaction uridine(54) in tRNA + S-adenosyl-L-methionine = 5-methyluridine(54) in tRNA + S-adenosyl-L-homocysteine + H(+). The catalysed reaction is uridine(341) in tmRNA + S-adenosyl-L-methionine = 5-methyluridine(341) in tmRNA + S-adenosyl-L-homocysteine + H(+). Functionally, dual-specificity methyltransferase that catalyzes the formation of 5-methyluridine at position 54 (m5U54) in all tRNAs, and that of position 341 (m5U341) in tmRNA (transfer-mRNA). The protein is tRNA/tmRNA (uracil-C(5))-methyltransferase of Escherichia coli O157:H7 (strain EC4115 / EHEC).